Consider the following 267-residue polypeptide: AMP/ADP-polyphosphate phosphotransferase (267 aa).

This sequence belongs to the polyphosphate kinase 2 (PPK2) family. Class III subfamily. Mn(2+) is required as a cofactor.

The enzyme catalyses [phosphate](n) + ADP = [phosphate](n+1) + AMP. The catalysed reaction is [phosphate](n) + ATP = [phosphate](n+1) + ADP. Functionally, uses inorganic polyphosphate (polyP) as a donor to convert both AMP to ADP and ADP to ATP. Can also use GMP, CMP, UMP, GDP, CDP and UDP. This Meiothermus ruber (strain ATCC 35948 / DSM 1279 / VKM B-1258 / 21) (Thermus ruber) protein is AMP/ADP-polyphosphate phosphotransferase.